The primary structure comprises 358 residues: Protein PXR1 (358 aa).

2 disordered regions span residues 1–26 (MGLAAPKNRSKISNDPQNTTWANNTS) and 146–342 (EVKT…KSAT). Residues 11-26 (KISNDPQNTTWANNTS) show a composition bias toward polar residues. Positions 25–79 (TSRFGHRILTSQGWQPGDSLGASDAAHAAHYTVASQSHIRVLLKDDNLGLGAKRG) constitute a G-patch domain. Composition is skewed to basic and acidic residues over residues 146-171 (EVKTETQAKVEVKSEPESDGAKEDDR) and 199-217 (SMDLRDQAKKDIAAESSKD). Basic residues predominate over residues 218 to 227 (KKGKKSKKDK). A compositionally biased stretch (acidic residues) spans 287 to 299 (DVEDLSSESEDES). Positions 300 to 315 (TPSASRPATGTSTPTV) are enriched in polar residues. A compositionally biased stretch (basic residues) spans 328-339 (HSVRQKWIRSKK).

The protein belongs to the PINX1 family.

The protein localises to the nucleus. It is found in the nucleolus. In terms of biological role, involved in rRNA-processing at A0, A1 and A2 sites and negatively regulates telomerase. In Phaeosphaeria nodorum (strain SN15 / ATCC MYA-4574 / FGSC 10173) (Glume blotch fungus), this protein is Protein PXR1 (PXR1).